The chain runs to 2034 residues: Sperm vesicle fusion protein fer-1 (2034 aa).

The disordered stretch occupies residues 1–80; that stretch reads MTVKEKLLKV…GGSDIELLPD (80 aa). The Cytoplasmic portion of the chain corresponds to 1 to 1998; that stretch reads MTVKEKLLKV…CIKYFWHYYG (1998 aa). Residues 66–79 show a composition bias toward acidic residues; it reads ELSDDGGSDIELLP. C2 domains follow at residues 229–367, 954–1082, 1120–1246, and 1363–1484; these read RIDE…YLPT, DSED…PQWF, YKER…KSDH, and KKGK…ATGG. The interval 1563–1619 is disordered; it reads QKAGKENFSDGSDQQNEDVSDGSWDEEDLEREKEKLKWEKHRSKGKPLKKVTTEKAE. Positions 1577–1591 are enriched in acidic residues; that stretch reads QNEDVSDGSWDEEDL. Basic residues predominate over residues 1600-1611; the sequence is WEKHRSKGKPLK. Residues 1684–1831 enclose the C2 5 domain; that stretch reads EYGAIPAPFN…EGIGSPSDVG (148 aa). Residues 1953–1972 are disordered; sequence QEPAGKKRSEPNHSPFLEKP. Residues 1999-2019 traverse the membrane as a helical segment; that stretch reads LQILLWLIIIVILILTIFVLL. Residues 2020–2034 lie on the Extracellular side of the membrane; it reads HTWPTILAEIIKAIF.

Belongs to the ferlin family. As to expression, exclusively expressed in the testis.

Its subcellular location is the membrane. In terms of biological role, required for the fusion of the membranous organelles (MOs) with the plasma membrane, a process essential in spermiogenesis. The protein is Sperm vesicle fusion protein fer-1 (fer-1) of Caenorhabditis elegans.